A 407-amino-acid polypeptide reads, in one-letter code: MRSWSAPDIVPLPGTGGPLRVHDTATGRIRTTTPGPRAGMYACGITPYDAAHLGHAFTYLTFDLVNRVWRDAGHDVNYVQNTTDIDDPLLERAEATGVDWRDLAHREIDVFREDMAALRIIPPTSYVGVVESVDLISDLAARIRDTGAAYELDGDLYFSVAEAPEFGEISNLDRGQMLELFGERGGDPQRTGKKDPLDWLLWRAERPGEPAWDSPLGRGRPGWHIECSAIALDRLGPAFDLNGGGSDLIFPHHEMGAAETRCATGGPNAHNHLHVGMVGLDGEKMSKSLGNLVFVSKLRQQGVDPAVIRLAMLAHHYRAPWEWTDAELPAATARAERWRSALALGAAPDAAPVLAAVRAALSEDLDSPAALAAVDAWADTALTEGGADTGAPALVRATVDTLLGVRL.

The interval 1–22 (MRSWSAPDIVPLPGTGGPLRVH) is disordered. Position 43 (C43) interacts with Zn(2+). L-cysteinyl-5'-AMP contacts are provided by residues 43–46 (CGIT), T58, and 81–83 (NTT). Residues 45-55 (ITPYDAAHLGH) carry the 'HIGH' region motif. Residues 183-188 (ERGGDP) carry the 'ERGGDP' region motif. L-cysteinyl-5'-AMP is bound at residue W223. C227 contributes to the Zn(2+) binding site. 245–247 (GSD) provides a ligand contact to L-cysteinyl-5'-AMP. A Zn(2+)-binding site is contributed by H252. V278 serves as a coordination point for L-cysteinyl-5'-AMP. The 'KMSKS' region signature appears at 284–288 (KMSKS).

The protein belongs to the class-I aminoacyl-tRNA synthetase family. MshC subfamily. Monomer. It depends on Zn(2+) as a cofactor.

The enzyme catalyses 1D-myo-inositol 2-amino-2-deoxy-alpha-D-glucopyranoside + L-cysteine + ATP = 1D-myo-inositol 2-(L-cysteinylamino)-2-deoxy-alpha-D-glucopyranoside + AMP + diphosphate + H(+). Catalyzes the ATP-dependent condensation of GlcN-Ins and L-cysteine to form L-Cys-GlcN-Ins. The protein is L-cysteine:1D-myo-inositol 2-amino-2-deoxy-alpha-D-glucopyranoside ligase of Nocardiopsis dassonvillei (strain ATCC 23218 / DSM 43111 / CIP 107115 / JCM 7437 / KCTC 9190 / NBRC 14626 / NCTC 10488 / NRRL B-5397 / IMRU 509) (Actinomadura dassonvillei).